Reading from the N-terminus, the 83-residue chain is Sec-independent protein translocase protein TatA (83 aa).

The helical transmembrane segment at 1 to 21 (MGSLSPWHWAILAVVVIVLFG) threads the bilayer. The tract at residues 48–83 (NENKAEASIETPTPVQSQRVDPSAASGQDSTEARPA) is disordered. A compositionally biased stretch (polar residues) spans 57-77 (ETPTPVQSQRVDPSAASGQDS).

It belongs to the TatA/E family. The Tat system comprises two distinct complexes: a TatABC complex, containing multiple copies of TatA, TatB and TatC subunits, and a separate TatA complex, containing only TatA subunits. Substrates initially bind to the TatABC complex, which probably triggers association of the separate TatA complex to form the active translocon.

It localises to the cell membrane. In terms of biological role, part of the twin-arginine translocation (Tat) system that transports large folded proteins containing a characteristic twin-arginine motif in their signal peptide across membranes. TatA could form the protein-conducting channel of the Tat system. This Mycobacterium bovis (strain BCG / Pasteur 1173P2) protein is Sec-independent protein translocase protein TatA.